We begin with the raw amino-acid sequence, 310 residues long: TLC domain-containing protein 2 (310 aa).

6 consecutive transmembrane segments (helical) span residues 6-26 (LLVA…LQLL), 40-60 (NIFV…VGLW), 79-99 (VLVA…LWNQ), 117-137 (CLST…SLLL), 167-187 (ASLA…SLWL), and 194-214 (LSLA…SISI). One can recognise a TLC domain in the interval 33–227 (RDRWMWRNIF…IRILTKDILQ (195 aa)).

It belongs to the TLCD family.

It localises to the cell membrane. Regulates the composition and fluidity of the plasma membrane. Inhibits the incorporation of membrane-fluidizing phospholipids containing omega-3 long-chain polyunsaturated fatty acids (LCPUFA) and thereby promotes membrane rigidity. Does not appear to have any effect on LCPUFA synthesis. This is TLC domain-containing protein 2 (Tlcd2) from Mus musculus (Mouse).